A 318-amino-acid chain; its full sequence is Transaldolase (318 aa).

K131 functions as the Schiff-base intermediate with substrate in the catalytic mechanism.

This sequence belongs to the transaldolase family. Type 1 subfamily. Homodimer.

The protein resides in the cytoplasm. It carries out the reaction D-sedoheptulose 7-phosphate + D-glyceraldehyde 3-phosphate = D-erythrose 4-phosphate + beta-D-fructose 6-phosphate. It participates in carbohydrate degradation; pentose phosphate pathway; D-glyceraldehyde 3-phosphate and beta-D-fructose 6-phosphate from D-ribose 5-phosphate and D-xylulose 5-phosphate (non-oxidative stage): step 2/3. In terms of biological role, transaldolase is important for the balance of metabolites in the pentose-phosphate pathway. This chain is Transaldolase, found in Buchnera aphidicola subsp. Cinara cedri (strain Cc).